A 102-amino-acid polypeptide reads, in one-letter code: Large ribosomal subunit protein bL21 (102 aa).

Belongs to the bacterial ribosomal protein bL21 family. Part of the 50S ribosomal subunit. Contacts protein L20.

Its function is as follows. This protein binds to 23S rRNA in the presence of protein L20. This is Large ribosomal subunit protein bL21 from Listeria innocua serovar 6a (strain ATCC BAA-680 / CLIP 11262).